A 215-amino-acid chain; its full sequence is Transmembrane protein 267 (215 aa).

The next 3 membrane-spanning stretches (helical) occupy residues 77–97, 114–134, and 178–198; these read FGEV…HFFQ, FLHC…AVHL, and SSFY…LMYL.

It is found in the membrane. In Mus musculus (Mouse), this protein is Transmembrane protein 267.